The sequence spans 212 residues: ER lumen protein-retaining receptor 1 (212 aa).

Topologically, residues 1-4 (MNIF) are lumenal. A helical membrane pass occupies residues 5-24 (RFLGDISHLSAILILLLKIW). Over 25 to 32 (KSRSCAGI) the chain is Cytoplasmic. A helical membrane pass occupies residues 33–52 (SGKSQLLFAIVFTTRYLDLF). The interaction with the K-D-E-L motif on target proteins stretch occupies residues 47–48 (RY). At 53–58 (TNFISL) the chain is on the lumenal side. Residues 59-79 (YNTSMKMVYVASSYATIWMIY) form a helical membrane-spanning segment. At 80-92 (SKFKATYDGNHDT) the chain is on the cytoplasmic side. The chain crosses the membrane as a helical span at residues 93–110 (FRVEFLIVPTAILAFLVN). Over 111–116 (HDFTPL) the chain is Lumenal. The helical transmembrane segment at 117–135 (EILWTFSIYLESVAILPQL) threads the bilayer. Over 136-149 (FMVSKTGEAETITS) the chain is Cytoplasmic. The chain crosses the membrane as a helical span at residues 150–168 (HYLFALGIYRALYLFNWIW). The interval 159–169 (RALYLFNWIWR) is interaction with the K-D-E-L motif on target proteins. Topologically, residues 169–178 (RYQFEGFFDL) are lumenal. A helical membrane pass occupies residues 179-199 (IAIVAGLVQTVLYCDFFYLYI). The Cytoplasmic portion of the chain corresponds to 200 to 212 (TKVLKGKKLSLPA). Positions 204–207 (KGKK) are important for recycling of cargo proteins with the sequence motif K-D-E-L from the Golgi to the endoplasmic reticulum.

This sequence belongs to the ERD2 family.

The protein resides in the golgi apparatus membrane. The protein localises to the cytoplasmic vesicle. It localises to the COPI-coated vesicle membrane. Its subcellular location is the endoplasmic reticulum membrane. It is found in the endoplasmic reticulum-Golgi intermediate compartment membrane. Functionally, receptor for the C-terminal sequence motif K-D-E-L that is present on endoplasmic reticulum resident proteins and that mediates their recycling from the Golgi back to the endoplasmic reticulum. This Xenopus tropicalis (Western clawed frog) protein is ER lumen protein-retaining receptor 1 (kdelr1).